The sequence spans 340 residues: tRNA N6-adenosine threonylcarbamoyltransferase (340 aa).

Residues histidine 115 and histidine 119 each contribute to the Fe cation site. Substrate-binding positions include 138–142, aspartate 171, glycine 184, aspartate 188, and asparagine 278; that span reads VVSGG. Aspartate 306 contacts Fe cation.

This sequence belongs to the KAE1 / TsaD family. Fe(2+) is required as a cofactor.

The protein localises to the cytoplasm. It catalyses the reaction L-threonylcarbamoyladenylate + adenosine(37) in tRNA = N(6)-L-threonylcarbamoyladenosine(37) in tRNA + AMP + H(+). Its function is as follows. Required for the formation of a threonylcarbamoyl group on adenosine at position 37 (t(6)A37) in tRNAs that read codons beginning with adenine. Is involved in the transfer of the threonylcarbamoyl moiety of threonylcarbamoyl-AMP (TC-AMP) to the N6 group of A37, together with TsaE and TsaB. TsaD likely plays a direct catalytic role in this reaction. This Clostridium botulinum (strain Kyoto / Type A2) protein is tRNA N6-adenosine threonylcarbamoyltransferase.